The sequence spans 292 residues: Acidic endochitinase (292 aa).

Positions 1 to 25 (MAAHKITTTLSIFFLLSSIFRSSDA) are cleaved as a signal peptide. The 267-residue stretch at 26–292 (AGIAIYWGQN…YSDSIKGSIG (267 aa)) folds into the GH18 domain. Intrachain disulfides connect C45–C92 and C75–C82. E152 serves as the catalytic Proton donor. C180 and C209 form a disulfide bridge.

The protein belongs to the glycosyl hydrolase 18 family. Chitinase class II subfamily.

The protein localises to the secreted. Its subcellular location is the extracellular space. The enzyme catalyses Random endo-hydrolysis of N-acetyl-beta-D-glucosaminide (1-&gt;4)-beta-linkages in chitin and chitodextrins.. Functionally, this protein functions as a defense against chitin containing fungal pathogens. The protein is Acidic endochitinase of Cucumis sativus (Cucumber).